We begin with the raw amino-acid sequence, 366 residues long: Phospho-N-acetylmuramoyl-pentapeptide-transferase (366 aa).

A run of 10 helical transmembrane segments spans residues 27-47 (AALF…INSL), 71-91 (TPTM…LLWA), 93-113 (LSNV…AIGF), 134-154 (LGIE…TALA), 174-194 (FMIN…VGAG), 205-225 (GLAI…AYLA), 245-265 (LAVV…FNAP), 268-288 (AIFM…TVAV), 294-314 (IVMA…IIQV), and 343-363 (QVVI…LSTL).

This sequence belongs to the glycosyltransferase 4 family. MraY subfamily. Mg(2+) is required as a cofactor.

The protein resides in the cell inner membrane. It carries out the reaction UDP-N-acetyl-alpha-D-muramoyl-L-alanyl-gamma-D-glutamyl-meso-2,6-diaminopimeloyl-D-alanyl-D-alanine + di-trans,octa-cis-undecaprenyl phosphate = di-trans,octa-cis-undecaprenyl diphospho-N-acetyl-alpha-D-muramoyl-L-alanyl-D-glutamyl-meso-2,6-diaminopimeloyl-D-alanyl-D-alanine + UMP. Its pathway is cell wall biogenesis; peptidoglycan biosynthesis. Functionally, catalyzes the initial step of the lipid cycle reactions in the biosynthesis of the cell wall peptidoglycan: transfers peptidoglycan precursor phospho-MurNAc-pentapeptide from UDP-MurNAc-pentapeptide onto the lipid carrier undecaprenyl phosphate, yielding undecaprenyl-pyrophosphoryl-MurNAc-pentapeptide, known as lipid I. This is Phospho-N-acetylmuramoyl-pentapeptide-transferase from Rhizobium leguminosarum bv. trifolii (strain WSM2304).